The sequence spans 255 residues: Imidazole glycerol phosphate synthase subunit HisF (255 aa).

Active-site residues include Asp-11 and Asp-130.

This sequence belongs to the HisA/HisF family. Heterodimer of HisH and HisF.

The protein resides in the cytoplasm. It catalyses the reaction 5-[(5-phospho-1-deoxy-D-ribulos-1-ylimino)methylamino]-1-(5-phospho-beta-D-ribosyl)imidazole-4-carboxamide + L-glutamine = D-erythro-1-(imidazol-4-yl)glycerol 3-phosphate + 5-amino-1-(5-phospho-beta-D-ribosyl)imidazole-4-carboxamide + L-glutamate + H(+). The protein operates within amino-acid biosynthesis; L-histidine biosynthesis; L-histidine from 5-phospho-alpha-D-ribose 1-diphosphate: step 5/9. Functionally, IGPS catalyzes the conversion of PRFAR and glutamine to IGP, AICAR and glutamate. The HisF subunit catalyzes the cyclization activity that produces IGP and AICAR from PRFAR using the ammonia provided by the HisH subunit. This is Imidazole glycerol phosphate synthase subunit HisF from Rhodopseudomonas palustris (strain BisA53).